Here is a 120-residue protein sequence, read N- to C-terminus: UPF0102 protein NT01CX_2205 (120 aa).

This sequence belongs to the UPF0102 family.

In Clostridium novyi (strain NT), this protein is UPF0102 protein NT01CX_2205.